Here is a 137-residue protein sequence, read N- to C-terminus: MANKPSVDDLKENLSEMQFYVTQKHGTEPPYTGRLLHNKRDGVYRCLVCDTPLFNSQSKYDSGCGWPSFYEPVNENSIRYLTDLSHGMERIEIRCGHCDAHLGHVFPDGPQPTGERYCVNSASLSFTDEKSGDQIKG.

One can recognise a MsrB domain in the interval 7–129; the sequence is VDDLKENLSE…NSASLSFTDE (123 aa). The Zn(2+) site is built by cysteine 46, cysteine 49, cysteine 95, and cysteine 98. Cysteine 118 acts as the Nucleophile in catalysis.

Belongs to the MsrB Met sulfoxide reductase family. Zn(2+) is required as a cofactor.

The catalysed reaction is L-methionyl-[protein] + [thioredoxin]-disulfide + H2O = L-methionyl-(R)-S-oxide-[protein] + [thioredoxin]-dithiol. The sequence is that of Peptide methionine sulfoxide reductase MsrB from Escherichia fergusonii (strain ATCC 35469 / DSM 13698 / CCUG 18766 / IAM 14443 / JCM 21226 / LMG 7866 / NBRC 102419 / NCTC 12128 / CDC 0568-73).